The sequence spans 1009 residues: DENN domain-containing protein 1A (1009 aa).

One can recognise a uDENN domain in the interval 13 to 145 (FEVYVEVAYP…HKLPIPDPGV (133 aa)). The cDENN domain occupies 162–298 (ELPSIPENRN…VISSLKNRLK (137 aa)). One can recognise a dDENN domain in the interval 300-378 (VSTTTGDGVA…DGRLDLLNSG (79 aa)). An FXDXF motif motif is present at residues 381–385 (FSDVF). The tract at residues 453-564 (DIAENGCAPT…TGPVPAPPDR (112 aa)) is disordered. The residue at position 473 (Ser473) is a Phosphoserine. Residues 477–489 (EAKDPKLREDRRP) are compositionally biased toward basic and acidic residues. Residues 500 to 509 (PRPHVVKRPK) are compositionally biased toward basic residues. Residue Thr519 is modified to Phosphothreonine. A phosphoserine mark is found at Ser520, Ser523, Ser536, Ser538, and Ser546. Positions 569–578 (DLLEDVFSNL) match the Clathrin box motif. Ser592 carries the phosphoserine modification. Positions 648 to 714 (IPSKPPAASP…RKTPELGIVP (67 aa)) are disordered. Ser749 carries the post-translational modification Phosphoserine. Disordered regions lie at residues 796–831 (STLP…QPPL) and 928–1009 (RSSA…ETFE). 2 stretches are compositionally biased toward pro residues: residues 820–831 (AGTPTPFPQPPL) and 945–957 (GDPP…PPQG). Positions 972-983 (DPFEDLLQKTKQ) are enriched in basic and acidic residues. Low complexity predominate over residues 986–997 (SPSPALAPAPDS). Positions 999–1009 (EQLRKQWETFE) are enriched in basic and acidic residues.

Interacts with RAB35. Interacts with clathrin and with the adapter protein complex 2, AP-2. Interacts with ITSN1 and SH3GL2. Interacts (when phosphorylated) with YWHAE. Phosphorylated on serine and/or threonine in an Akt-dependent manner. Phosphorylation probably regulates the guanine nucleotide exchange factor (GEF) activity, possibly by disrupting an intramolecular interaction between the DENN domain and the C-terminus of the protein, thereby relieving the autoinhibition.

It localises to the cytoplasmic vesicle. Its subcellular location is the clathrin-coated vesicle membrane. The protein localises to the presynaptic cell membrane. The guanine nucleotide exchange factor (GEF) activity is autoinhibited. Autoinhibition may be the result of intramolecular interaction between the DENN domain and the C-terminus, which is disrupted upon phosphorylation. Activation is regulated by Akt activation. In terms of biological role, guanine nucleotide exchange factor (GEF) regulating clathrin-mediated endocytosis through RAB35 activation. Promotes the exchange of GDP to GTP, converting inactive GDP-bound RAB35 into its active GTP-bound form. Regulates clathrin-mediated endocytosis of synaptic vesicles and mediates exit from early endosomes. Binds phosphatidylinositol-phosphates (PtdInsPs), with some preference for PtdIns(3)P. In Homo sapiens (Human), this protein is DENN domain-containing protein 1A.